Consider the following 449-residue polypeptide: Amidophosphoribosyltransferase (449 aa).

A propeptide spanning residues 1 to 9 is cleaved from the precursor; it reads MRGEIMKEK. The Nucleophile role is filled by C10. The Glutamine amidotransferase type-2 domain occupies 10-224; it reads CGIFGAYSQD…PGEVIVVKDG (215 aa). Position 239 (C239) interacts with [4Fe-4S] cluster. Residues S286, D346, and D347 each coordinate Mg(2+). [4Fe-4S] cluster is bound by residues C383, C432, and C435.

In the C-terminal section; belongs to the purine/pyrimidine phosphoribosyltransferase family. The cofactor is Mg(2+). Requires [4Fe-4S] cluster as cofactor.

The catalysed reaction is 5-phospho-beta-D-ribosylamine + L-glutamate + diphosphate = 5-phospho-alpha-D-ribose 1-diphosphate + L-glutamine + H2O. It participates in purine metabolism; IMP biosynthesis via de novo pathway; N(1)-(5-phospho-D-ribosyl)glycinamide from 5-phospho-alpha-D-ribose 1-diphosphate: step 1/2. In terms of biological role, catalyzes the formation of phosphoribosylamine from phosphoribosylpyrophosphate (PRPP) and glutamine. This is Amidophosphoribosyltransferase from Pyrococcus horikoshii (strain ATCC 700860 / DSM 12428 / JCM 9974 / NBRC 100139 / OT-3).